We begin with the raw amino-acid sequence, 211 residues long: Dual specificity phosphatase 29 (211 aa).

One can recognise a Tyrosine-protein phosphatase domain in the interval 47–192; sequence HVNEVWPGIY…LRTLDIQLAI (146 aa). Residue 136 to 143 participates in substrate binding; the sequence is HCAMGRSR. Catalysis depends on Cys-137, which acts as the Phosphocysteine intermediate.

The protein belongs to the protein-tyrosine phosphatase family. Non-receptor class dual specificity subfamily.

It localises to the cytoplasm. Its subcellular location is the nucleus. It catalyses the reaction O-phospho-L-tyrosyl-[protein] + H2O = L-tyrosyl-[protein] + phosphate. The enzyme catalyses O-phospho-L-seryl-[protein] + H2O = L-seryl-[protein] + phosphate. It carries out the reaction O-phospho-L-threonyl-[protein] + H2O = L-threonyl-[protein] + phosphate. Its function is as follows. Dual specificity phosphatase able to dephosphorylate phosphotyrosine, phosphoserine and phosphothreonine residues within the same substrate, with a preference for phosphotyrosine as a substrate. Involved in the modulation of AMPK and MAPK1/2 signaling pathways. This chain is Dual specificity phosphatase 29 (dusp29), found in Callorhinchus milii (Ghost shark).